A 583-amino-acid polypeptide reads, in one-letter code: Membrane protein insertase YidC (583 aa).

The helical transmembrane segment at 5-25 (SVTGLALIALIMIVWLQFMSP) threads the bilayer. The interval 28–50 (KSVQPDNRPKAQTTATVSQEKTE) is disordered. Positions 37-46 (KAQTTATVSQ) are enriched in polar residues. Helical transmembrane passes span 341–361 (PFAE…ISNY), 362–382 (GLII…LSMA), 427–447 (LGGC…FYVF), 477–497 (IPVY…TVFI), and 515–535 (LYIF…GLGL).

The protein belongs to the OXA1/ALB3/YidC family. Type 1 subfamily. Interacts with the Sec translocase complex via SecD. Specifically interacts with transmembrane segments of nascent integral membrane proteins during membrane integration.

It localises to the cell inner membrane. Its function is as follows. Required for the insertion and/or proper folding and/or complex formation of integral membrane proteins into the membrane. Involved in integration of membrane proteins that insert both dependently and independently of the Sec translocase complex, as well as at least some lipoproteins. Aids folding of multispanning membrane proteins. This Chlorobium limicola (strain DSM 245 / NBRC 103803 / 6330) protein is Membrane protein insertase YidC.